Consider the following 366-residue polypeptide: Alanine racemase (366 aa).

The active-site Proton acceptor; specific for D-alanine is Lys-35. The residue at position 35 (Lys-35) is an N6-(pyridoxal phosphate)lysine. Arg-130 contributes to the substrate binding site. The active-site Proton acceptor; specific for L-alanine is the Tyr-254. Substrate is bound at residue Met-302.

The protein belongs to the alanine racemase family. It depends on pyridoxal 5'-phosphate as a cofactor.

It carries out the reaction L-alanine = D-alanine. It functions in the pathway amino-acid biosynthesis; D-alanine biosynthesis; D-alanine from L-alanine: step 1/1. Its function is as follows. Catalyzes the interconversion of L-alanine and D-alanine. May also act on other amino acids. In Variovorax paradoxus (strain S110), this protein is Alanine racemase (alr).